A 457-amino-acid chain; its full sequence is MKKTMFDKIWHQHVITGEPGEPQLIYVDLQLLHEVTSPQAFEGLREKNRQVRRPDRNFATMDHNVPTVDIFNIKDLISKKQIETLAKNTKDFGIRLAGMGSKDQGIVHVIGPQLGLTQPGMVIVCGDSHTATHGAFGSIAFGIGTSEVEHVLATQTIWQTKPKTIGIHVHGKLSIGVYAKDIIMGIIAREGVSFGTGYAVEFYGDTIRNMNMEERMTLCNMVIEGGAKMGSIQPDQTTFDYIADRKYAPGNMEKAVSYWKQFYTDSPDAFDKVIDFSVNELAPFVSWGTNPGMAVPIDQPFPKIKNEEDKKAYEYVGLKAGEKANQIPIKFVFFGSCTNGRLSDLIIAAKVLKNKHIKNGITALVVPGSRKIKEKAEKIGLDKIFKEAGCEWREPGCSACLGMNPDRVPAGIHCASTSNRNFAGRQGAGSRTHLASPAMVAAAAIHGRFIDIRKEII.

Residues C337, C397, and C400 each contribute to the [4Fe-4S] cluster site.

The protein belongs to the aconitase/IPM isomerase family. LeuC type 1 subfamily. In terms of assembly, heterodimer of LeuC and LeuD. The cofactor is [4Fe-4S] cluster.

The enzyme catalyses (2R,3S)-3-isopropylmalate = (2S)-2-isopropylmalate. It participates in amino-acid biosynthesis; L-leucine biosynthesis; L-leucine from 3-methyl-2-oxobutanoate: step 2/4. Functionally, catalyzes the isomerization between 2-isopropylmalate and 3-isopropylmalate, via the formation of 2-isopropylmaleate. The polypeptide is 3-isopropylmalate dehydratase large subunit (Oenococcus oeni (strain ATCC BAA-331 / PSU-1)).